An 88-amino-acid polypeptide reads, in one-letter code: HssA/B-like protein 12 (88 aa).

Belongs to the hssA/B family.

The sequence is that of HssA/B-like protein 12 (hssl12) from Dictyostelium discoideum (Social amoeba).